The primary structure comprises 552 residues: Leiomodin-2 (552 aa).

Positions 1 to 47 (MSTFGYRRELSKYEDIDEDELLASLTEEELKELERELEDIEPDRNLP) are interaction with tropomyosin alpha. 2 interaction with actin regions span residues 1 to 169 (MSTF…SSHV) and 170 to 498 (RHKK…KEIK). Positions 13–46 (YEDIDEDELLASLTEEELKELERELEDIEPDRNL) form a coiled coil. Disordered regions lie at residues 33 to 67 (LERE…FSRE), 87 to 191 (GACE…DGKD), and 364 to 531 (MDKQ…DNLM). Polar residues predominate over residues 51-64 (RQKSLTEKTPTGTF). Residues 86 to 151 (LGACEKDSEQ…DDEDEEKQNS (66 aa)) adopt a coiled-coil conformation. Acidic residues-rich tracts occupy residues 93–108 (SEQE…EECF) and 115–147 (VSEE…EDEE). The segment covering 364–377 (MDKQRQKRMQEQRQ) has biased composition (basic and acidic residues). A compositionally biased stretch (low complexity) spans 398-415 (PRSSPYTSPKSSPWSSPK). A compositionally biased stretch (pro residues) spans 425 to 450 (SQPPAPAPPPPPPPPPPPPPPPPPVI). A compositionally biased stretch (basic residues) spans 478–488 (QKKKKGKKGKK). Residues 489–513 (HENSILKEIKDSLKSVSDRKSEEGS) show a composition bias toward basic and acidic residues. The span at 514 to 524 (RPSTRPSTPQR) shows a compositional bias: polar residues. Residues 526 to 545 (LHDNLMEAIRASSIKQLRRV) form an interaction with actin 3 region. In terms of domain architecture, WH2 spans 526-545 (LHDNLMEAIRASSIKQLRRV).

This sequence belongs to the tropomodulin family. Can bind at least three actin monomers and thereby provides a nucleus for actin filament formation. Interacts (via N-terminus) with tropomyosin alpha (TPM1) (via N-terminus). May also interact with TPM2 (via N-terminus).

The protein resides in the cytoplasm. Its subcellular location is the myofibril. The protein localises to the sarcomere. It is found in the m line. It localises to the cytoskeleton. In terms of biological role, mediates nucleation of actin filaments and thereby promotes actin polymerization. Plays a role in the regulation of actin filament length. Required for normal sarcomere organization in the heart, and for normal heart function. This chain is Leiomodin-2 (LMOD2), found in Gallus gallus (Chicken).